The chain runs to 337 residues: tRNA N6-adenosine threonylcarbamoyltransferase (337 aa).

The Fe cation site is built by H111 and H115. Substrate is bound by residues 134–138 (LVSGG), D167, G180, and N272. Fe cation is bound at residue D300.

Belongs to the KAE1 / TsaD family. Fe(2+) is required as a cofactor.

It localises to the cytoplasm. It catalyses the reaction L-threonylcarbamoyladenylate + adenosine(37) in tRNA = N(6)-L-threonylcarbamoyladenosine(37) in tRNA + AMP + H(+). In terms of biological role, required for the formation of a threonylcarbamoyl group on adenosine at position 37 (t(6)A37) in tRNAs that read codons beginning with adenine. Is involved in the transfer of the threonylcarbamoyl moiety of threonylcarbamoyl-AMP (TC-AMP) to the N6 group of A37, together with TsaE and TsaB. TsaD likely plays a direct catalytic role in this reaction. The polypeptide is tRNA N6-adenosine threonylcarbamoyltransferase (Shewanella sediminis (strain HAW-EB3)).